The sequence spans 136 residues: MFQSLIAIDYGKARIGISSGQMITKTATPIGTVEAYDGVPNWIELDKIIKCWNPSDIIIGLPLDTQNFETDITKSAKDFAKEVQQRYQRKVHLINEAYSTREARWRLEEVKSKKVSHIKVDALAACVILETWMSEN.

It belongs to the YqgF nuclease family.

It localises to the cytoplasm. In terms of biological role, could be a nuclease involved in processing of the 5'-end of pre-16S rRNA. The polypeptide is Putative pre-16S rRNA nuclease (Francisella tularensis subsp. tularensis (strain FSC 198)).